The chain runs to 166 residues: Cofilin-1 (166 aa).

Ala2 carries the post-translational modification N-acetylalanine. Phosphoserine occurs at positions 3 and 8. Positions 4 to 153 (GVAVSDGVIK…KDRCTLAEKL (150 aa)) constitute an ADF-H domain. An N6-acetyllysine modification is found at Lys13. Thr25 is modified (phosphothreonine). Positions 30-34 (KKRKK) match the Nuclear localization signal motif. Ser41 is subject to Phosphoserine. Tyr68 bears the Phosphotyrosine mark. Lys73 carries the N6-acetyllysine modification. Lys132 is covalently cross-linked (Glycyl lysine isopeptide (Lys-Gly) (interchain with G-Cter in SUMO2)). Tyr140 is subject to Phosphotyrosine. N6-acetyllysine is present on Lys144. Ser156 carries the phosphoserine modification.

The protein belongs to the actin-binding proteins ADF family. As to quaternary structure, can bind G- and F-actin in a 1:1 ratio of cofilin to actin. It is a major component of intranuclear and cytoplasmic actin rods. Interacts with the subcortical maternal complex (SCMC) via interaction with TLE6 and NLRP5. Interacts with C9orf72. Post-translationally, inactivated by phosphorylation on Ser-3. Phosphorylated on Ser-3 in resting cells. Dephosphorylated by PDXP/chronophin; this restores its activity in promoting actin filament depolymerization. The phosphorylation of Ser-24 may prevent recognition of the nuclear localization signal. Phosphorylated via a ARRB1-RAC1-LIMK1-PAK1 cascade upon active ligand stimulation of atypical chemokine receptor ACKR2.

The protein resides in the nucleus matrix. It is found in the cytoplasm. It localises to the cytoskeleton. The protein localises to the cell projection. Its subcellular location is the ruffle membrane. The protein resides in the lamellipodium membrane. It is found in the lamellipodium. It localises to the growth cone. The protein localises to the axon. Functionally, binds to F-actin and exhibits pH-sensitive F-actin depolymerizing activity. Important for normal progress through mitosis and normal cytokinesis. In conjunction with the subcortical maternal complex (SCMC), plays an essential role for zygotes to progress beyond the first embryonic cell divisions via regulation of actin dynamics. Required for the centralization of the mitotic spindle and symmetric division of zygotes. Plays a role in the regulation of cell morphology and cytoskeletal organization in epithelial cells. Required for the up-regulation of atypical chemokine receptor ACKR2 from endosomal compartment to cell membrane, increasing its efficiency in chemokine uptake and degradation. Required for neural tube morphogenesis and neural crest cell migration. The polypeptide is Cofilin-1 (Cfl1) (Rattus norvegicus (Rat)).